A 158-amino-acid polypeptide reads, in one-letter code: Transcription elongation factor GreA (158 aa).

The stretch at 49-73 forms a coiled coil; it reads QAAREQQGFIEGRIKEIEAKLANAQ.

This sequence belongs to the GreA/GreB family.

In terms of biological role, necessary for efficient RNA polymerase transcription elongation past template-encoded arresting sites. The arresting sites in DNA have the property of trapping a certain fraction of elongating RNA polymerases that pass through, resulting in locked ternary complexes. Cleavage of the nascent transcript by cleavage factors such as GreA or GreB allows the resumption of elongation from the new 3'terminus. GreA releases sequences of 2 to 3 nucleotides. In Methylococcus capsulatus (strain ATCC 33009 / NCIMB 11132 / Bath), this protein is Transcription elongation factor GreA.